The following is a 137-amino-acid chain: MIIGIGSDLIDIRRIENSLERHGQRFVQRIYTEVEQARSENRRARAASYAKRFAAKEACAKALGTGLAQGVFWRDMGVVNLPSGAPTMALTGGALARLEKILPPGHKAAIHLTITDDFPLAQAFVIIEALPVEQAPH.

Mg(2+)-binding residues include Asp-8 and Glu-57.

It belongs to the P-Pant transferase superfamily. AcpS family. It depends on Mg(2+) as a cofactor.

It localises to the cytoplasm. The catalysed reaction is apo-[ACP] + CoA = holo-[ACP] + adenosine 3',5'-bisphosphate + H(+). Its function is as follows. Transfers the 4'-phosphopantetheine moiety from coenzyme A to a Ser of acyl-carrier-protein. In Mesorhizobium japonicum (strain LMG 29417 / CECT 9101 / MAFF 303099) (Mesorhizobium loti (strain MAFF 303099)), this protein is Holo-[acyl-carrier-protein] synthase.